The chain runs to 270 residues: Probable inner membrane protein BTH_II0599 (270 aa).

The next 6 membrane-spanning stretches (helical) occupy residues 24-44 (RNPLAFVTLFFTYLLAMMLVS), 45-65 (LVPVIGAALPLLLIPGIAVGF), 98-118 (LLTLGGLYIVSMAAVFACSAL), 150-170 (ALIAAALYAPVAMMFWFAPVL), 198-218 (VYGLLWFALALGVSFGLAALM), and 226-246 (YALMVMMPASIVITAMLYCSF).

It localises to the cell inner membrane. Functionally, (Microbial infection) Probably transports the toxic C-terminal region of CdiA-2 from B.pseudomallei strain 1026b across the inner membrane to the cytoplasm, where CdiA has a toxic effect. Expression in E.coli makes the bacteria sensitive to the tRNase domain of B.pseudomallei strain 1026b CdiA-2. This Burkholderia thailandensis (strain ATCC 700388 / DSM 13276 / CCUG 48851 / CIP 106301 / E264) protein is Probable inner membrane protein BTH_II0599.